The chain runs to 255 residues: MWIGIISLFPEMFRAITDYGVTGRAVKKGLLNIQSWSPRDFAHDRHRTVDERPYGGGPGMLMMVQPLRDAIHTAKAAAGEGAKVIYLSPQGRKLDQAGVSELATNQKLILVCGRYEGIDERVIQTEIDEEWSIGDYVLSGGELPAMTLIDSVARFIPGVLGHEASATEDSFADGLLDCPHYTRPEVLEGMEVPAVLLSGNHAEIRRWRLKQSLGRTWLRRPELLENLALTEEQAKLLAEFKKEHAHQQHKHDGMA.

Residues Gly113 and 133-138 (IGDYVL) contribute to the S-adenosyl-L-methionine site.

This sequence belongs to the RNA methyltransferase TrmD family. Homodimer.

It is found in the cytoplasm. The catalysed reaction is guanosine(37) in tRNA + S-adenosyl-L-methionine = N(1)-methylguanosine(37) in tRNA + S-adenosyl-L-homocysteine + H(+). Its function is as follows. Specifically methylates guanosine-37 in various tRNAs. The sequence is that of tRNA (guanine-N(1)-)-methyltransferase from Enterobacter sp. (strain 638).